The chain runs to 419 residues: Tyrosine--tRNA ligase (419 aa).

Tyr-34 contributes to the L-tyrosine binding site. A 'HIGH' region motif is present at residues 39-48 (PTADSLHLGN). Residues Tyr-169 and Gln-173 each coordinate L-tyrosine. Residues 229–233 (KFGKS) carry the 'KMSKS' region motif. Position 232 (Lys-232) interacts with ATP. Residues 353 to 419 (LTLIELLISV…GKKKNFVLTY (67 aa)) enclose the S4 RNA-binding domain.

Belongs to the class-I aminoacyl-tRNA synthetase family. TyrS type 1 subfamily. In terms of assembly, homodimer.

The protein resides in the cytoplasm. The catalysed reaction is tRNA(Tyr) + L-tyrosine + ATP = L-tyrosyl-tRNA(Tyr) + AMP + diphosphate + H(+). Catalyzes the attachment of tyrosine to tRNA(Tyr) in a two-step reaction: tyrosine is first activated by ATP to form Tyr-AMP and then transferred to the acceptor end of tRNA(Tyr). The polypeptide is Tyrosine--tRNA ligase (Lactococcus lactis subsp. cremoris (strain MG1363)).